A 760-amino-acid chain; its full sequence is Transferrin receptor protein 1 (760 aa).

Over 1 to 65 (MMDQARSAFS…VTKPKRCGGS (65 aa)) the chain is Cytoplasmic. The interval 1–67 (MMDQARSAFS…KPKRCGGSIC (67 aa)) is mediates interaction with SH3BP4. Ser10 and Ser19 each carry phosphoserine. Phosphotyrosine is present on Tyr20. Residues 20 to 23 (YTRF) carry the Endocytosis signal motif. The residue at position 21 (Thr21) is a Phosphothreonine. Ser24 is modified (phosphoserine). The Stop-transfer sequence signature appears at 58–61 (KPKR). Residues Cys62 and Cys67 are each lipidated (S-palmitoyl cysteine). The chain crosses the membrane as a helical; Signal-anchor for type II membrane protein span at residues 66 to 86 (ICYGTIAVIIFFLIGFMIGYL). Residues 87–760 (GYCKGVEPKT…GDVWDIDNEF (674 aa)) lie on the Extracellular side of the membrane. The 91-residue stretch at 223–313 (SKAATVTGKL…GTGDPYTPGF (91 aa)) folds into the PA domain. N-linked (GlcNAc...) asparagine glycans are attached at residues Asn251 and Asn317. Residues 569 to 760 (TMDTYKELTE…GDVWDIDNEF (192 aa)) are ligand-binding. The Cell attachment site signature appears at 646-648 (RGD). N-linked (GlcNAc...) asparagine glycans are attached at residues Asn722 and Asn727.

The protein belongs to the peptidase M28 family. M28B subfamily. As to quaternary structure, homodimer; disulfide-linked. Binds one transferrin or HFE molecule per subunit. Interacts with SH3BP4. Interacts with STEAP3; facilitates TFRC endocytosis in erythroid precursor cells. Stearoylated by ZDHHC6 which inhibits TFRC-mediated activation of the JNK pathway and promotes mitochondrial fragmentation. Stearoylation does not affect iron uptake.

It localises to the cell membrane. It is found in the melanosome. Functionally, cellular uptake of iron occurs via receptor-mediated endocytosis of ligand-occupied transferrin receptor into specialized endosomes. Endosomal acidification leads to iron release. The apotransferrin-receptor complex is then recycled to the cell surface with a return to neutral pH and the concomitant loss of affinity of apotransferrin for its receptor. Transferrin receptor is necessary for development of erythrocytes and the nervous system. Positively regulates T and B cell proliferation through iron uptake. Acts as a lipid sensor that regulates mitochondrial fusion by regulating activation of the JNK pathway. When dietary levels of stearate (C18:0) are low, promotes activation of the JNK pathway, resulting in HUWE1-mediated ubiquitination and subsequent degradation of the mitofusin MFN2 and inhibition of mitochondrial fusion. When dietary levels of stearate (C18:0) are high, TFRC stearoylation inhibits activation of the JNK pathway and thus degradation of the mitofusin MFN2. Mediates uptake of NICOL1 into fibroblasts where it may regulate extracellular matrix production. This is Transferrin receptor protein 1 (TFRC) from Pongo abelii (Sumatran orangutan).